Reading from the N-terminus, the 370-residue chain is Glycerophosphodiester phosphodiesterase GDPD3 (370 aa).

Positions 35–322 (FVLMGHRGFG…DMVKDISEAI (288 aa)) constitute a GP-PDE domain.

It belongs to the glycerophosphoryl diester phosphodiesterase family. As to expression, expressed in flowers and siliques.

The enzyme catalyses a sn-glycero-3-phosphodiester + H2O = an alcohol + sn-glycerol 3-phosphate + H(+). This is Glycerophosphodiester phosphodiesterase GDPD3 from Arabidopsis thaliana (Mouse-ear cress).